A 540-amino-acid chain; its full sequence is Beta-glucosidase 1B (540 aa).

Residues Gln25, His128, and Asn174 each contribute to the substrate site. Glu175 (proton donor) is an active-site residue. Residue Tyr316 participates in substrate binding. The active-site Nucleophile is the Glu380. Substrate is bound by residues Trp430 and 437–438 (EW). The span at 481-492 (PAAETKKAATPS) shows a compositional bias: low complexity. The tract at residues 481-524 (PAAETKKAATPSPLKPHGAISNGVSKKSSATKEPKSASRKKGRK) is disordered.

Belongs to the glycosyl hydrolase 1 family.

It catalyses the reaction Hydrolysis of terminal, non-reducing beta-D-glucosyl residues with release of beta-D-glucose.. In terms of biological role, plays an important role in cellulose degradation. Shows hydrolytic activity against several glycosidic compounds. In Phanerodontia chrysosporium (White-rot fungus), this protein is Beta-glucosidase 1B.